Consider the following 119-residue polypeptide: Small ribosomal subunit protein bS6 (119 aa).

Residues 99–119 (KKEKKQSRKEEGSENSEKVEE) form a disordered region.

Belongs to the bacterial ribosomal protein bS6 family.

In terms of biological role, binds together with bS18 to 16S ribosomal RNA. This chain is Small ribosomal subunit protein bS6, found in Thermosipho melanesiensis (strain DSM 12029 / CIP 104789 / BI429).